The chain runs to 846 residues: Integrin beta-PS (846 aa).

The N-terminal stretch at 1–28 is a signal peptide; the sequence is MILERNRRCQLALLMIAILAAIAGQTDA. The Extracellular segment spans residues 29 to 777; that stretch reads QKAAKLTAVS…NKECPAKVFM (749 aa). A disulfide bridge links cysteine 46 with cysteine 55. N-linked (GlcNAc...) asparagine glycosylation is present at asparagine 72. Residues 186-419 enclose the VWFA domain; it reads DLYYLMDLSK…ELVKEEYRKI (234 aa). Cysteines 249 and 252 form a disulfide. N-linked (GlcNAc...) asparagine glycosylation is found at asparagine 266 and asparagine 277. Cysteine 300 and cysteine 341 are disulfide-bonded. 2 N-linked (GlcNAc...) asparagine glycosylation sites follow: asparagine 403 and asparagine 428. 21 disulfide bridges follow: cysteine 441–cysteine 453, cysteine 473–cysteine 741, cysteine 507–cysteine 530, cysteine 522–cysteine 533, cysteine 535–cysteine 544, cysteine 546–cysteine 579, cysteine 561–cysteine 577, cysteine 571–cysteine 582, cysteine 584–cysteine 599, cysteine 601–cysteine 624, cysteine 606–cysteine 622, cysteine 614–cysteine 627, cysteine 629–cysteine 638, cysteine 640–cysteine 664, cysteine 647–cysteine 662, cysteine 656–cysteine 667, cysteine 669–cysteine 682, cysteine 685–cysteine 688, cysteine 692–cysteine 701, cysteine 698–cysteine 771, and cysteine 719–cysteine 749. 4 I-EGF domains span residues 507–545, 546–600, 601–639, and 640–683; these read CENPGSIGYQVQANSCSGHGTSMCGICNCDDSYFGNKCE, CSAT…KHCE, CDNFSCERNRNQLCSGPDHGTCECGRCKCKPGWTGSNCG, and CQES…RHCE. Asparagine 557 carries an N-linked (GlcNAc...) asparagine glycan. Residue asparagine 603 is glycosylated (N-linked (GlcNAc...) asparagine). N-linked (GlcNAc...) asparagine glycosylation occurs at asparagine 644. Asparagine 718 is a glycosylation site (N-linked (GlcNAc...) asparagine). The helical transmembrane segment at 778 to 798 threads the bilayer; the sequence is LGIVMGVIAAIVLVGLAILLL. At 799–846 the chain is on the cytoplasmic side; that stretch reads WKLLTTIHDRREFARFEKERMNAKWDTGENPIYKQATSTFKNPMYAGK. 2 positions are modified to phosphotyrosine: tyrosine 831 and tyrosine 843.

Belongs to the integrin beta chain family. As to quaternary structure, heterodimer of an alpha and a beta subunit. Beta-PS associates with either alpha-PS1, alpha-PS2, alpha-PS3, alpha-PS4 or alpha-PS5. In terms of tissue distribution, in ovaries, strongly expressed in follicle cells. In oocytes, expressed in the forming dorsal appendages (at protein level). Expressed in the embryonic dorsal cuticle, the larval eye and the wing imaginal disk. In testes, detected at the interface between somatic hub cells and cyst stem cells.

It localises to the cell membrane. The protein localises to the apical cell membrane. It is found in the lateral cell membrane. Its subcellular location is the basal cell membrane. In terms of biological role, integrin alpha-PS1/beta-PS is a receptor for laminin. Integrin alpha-PS2/beta-PS is a receptor for Tig, wb and Ten-m. Contributes to endodermal integrity and adhesion between the midgut epithelium and the surrounding visceral muscle. Essential for migration of the primordial midgut cells and for maintaining, but not establishing, cell polarity in the midgut epithelium. The two beta subunits mediate midgut migration by distinct mechanisms: beta-PS requires rhea/talin and Itgbn does not. Required for rhea/talin correct cellular localization in the midgut. Required for many embryonic (dorsal closure and somatic muscle attachments) and postembryonic developmental processes (attachment between cell layers of imaginal disks, organization of ommatidial arrays and flight muscle development). Involved in the function and/or development of the olfactory system. In the testes, essential for shv-dependent maintenance of somatic hub cells and their localization to the apical tip. Plays a role in timely border cell migration during oogenesis. This chain is Integrin beta-PS (mys), found in Drosophila melanogaster (Fruit fly).